The following is a 915-amino-acid chain: Transferrin-binding protein A (915 aa).

Residues 1–24 (MQQQHLFRLNILCLSLMTALPAYA) form the signal peptide. The TonB box motif lies at 38-45 (DTIQVKAK). The TBDR plug domain maps to 51–176 (RDNEVTGLGK…LAGSVAFQTK (126 aa)). The 729-residue stretch at 187–915 (QWGIQSKTAY…NYTFSLEMKF (729 aa)) folds into the TBDR beta-barrel domain. The span at 526 to 540 (LKTPPQNNGKKTSPN) shows a compositional bias: polar residues. Positions 526–545 (LKTPPQNNGKKTSPNGREKN) are disordered. The short motif at 898-915 (NRYAAPGRNYTFSLEMKF) is the TonB C-terminal box element.

It belongs to the TonB-dependent receptor family. Binds both human apo- and holo-transferrin (TF), via the TF C-terminus. Forms a large complex with TF and TbpB.

It is found in the cell outer membrane. Neisseria acquires iron by extracting it from serum transferrin (TF) in its human host. Acts as a TF receptor and is required for TF utilization. Binds both apo- and holo-TF, via the TF C-terminus. The protein is Transferrin-binding protein A of Neisseria gonorrhoeae.